The following is an 829-amino-acid chain: Protein roadkill (829 aa).

Composition is skewed to low complexity over residues 24–36 (EQQQ…QQQQ), 122–140 (TPAA…QAAP), and 266–288 (SSSS…SSSS). Disordered stretches follow at residues 24–47 (EQQQ…CCEN), 106–142 (SSLQ…APSV), 266–296 (SSSS…SHHS), and 313–400 (HLNQ…NQQQ). Residues 313–322 (HLNQQQHHHP) are compositionally biased toward basic residues. Low complexity-rich tracts occupy residues 323-353 (LSAS…QQQH), 372-382 (SSSSSSSSSSS), and 389-400 (SSSSSNSNNQQQ). An MATH domain is found at 486–616 (KFSYMWTINN…EDKLTIFCEV (131 aa)). The BTB domain maps to 655-722 (SDVTLSVGGR…IYTGKAPNLE (68 aa)).

Belongs to the Tdpoz family. Interacts with ci and gft/CUL3. In terms of tissue distribution, expressed near the anterio-posterior compartment boundary of antenna, leg and wing disks.

The protein resides in the nucleus. It functions in the pathway protein modification; protein ubiquitination. Involved in segment polarity. In complex with gft/CUL3, promotes ubiquitination of ci and its subsequent degradation by the proteasome, which results in hh signaling attenuation. This regulation may be important during eye formation for proper packing of ommatidia into a hexagonal array. The polypeptide is Protein roadkill (rdx) (Drosophila melanogaster (Fruit fly)).